Reading from the N-terminus, the 226-residue chain is UPF0758 protein M6_Spy0838 (226 aa).

Residues 103-225 (SVLTSVQVAE…YYSFREKSTL (123 aa)) enclose the MPN domain. Residues histidine 174, histidine 176, and aspartate 187 each contribute to the Zn(2+) site. Residues 174-187 (HNHPSGNIEPSSND) carry the JAMM motif motif.

It belongs to the UPF0758 family.

This Streptococcus pyogenes serotype M6 (strain ATCC BAA-946 / MGAS10394) protein is UPF0758 protein M6_Spy0838.